Consider the following 117-residue polypeptide: Immunoglobulin heavy variable 1-69 (117 aa).

Residues M1–S19 form the signal peptide. Pyrrolidone carboxylic acid is present on Q20. Positions Q20–S44 are framework-1. In terms of domain architecture, Ig-like spans Q20–R117. The cysteines at positions 41 and 115 are disulfide-linked. A complementarity-determining-1 region spans residues G45 to A52. The interval I53 to G69 is framework-2. Positions I70 to A77 are complementarity-determining-2. A framework-3 region spans residues N78–C115. Positions A116 to R117 are complementarity-determining-3.

In terms of assembly, immunoglobulins are composed of two identical heavy chains and two identical light chains; disulfide-linked.

It localises to the secreted. The protein resides in the cell membrane. Functionally, v region of the variable domain of immunoglobulin heavy chains that participates in the antigen recognition. Immunoglobulins, also known as antibodies, are membrane-bound or secreted glycoproteins produced by B lymphocytes. In the recognition phase of humoral immunity, the membrane-bound immunoglobulins serve as receptors which, upon binding of a specific antigen, trigger the clonal expansion and differentiation of B lymphocytes into immunoglobulins-secreting plasma cells. Secreted immunoglobulins mediate the effector phase of humoral immunity, which results in the elimination of bound antigens. The antigen binding site is formed by the variable domain of one heavy chain, together with that of its associated light chain. Thus, each immunoglobulin has two antigen binding sites with remarkable affinity for a particular antigen. The variable domains are assembled by a process called V-(D)-J rearrangement and can then be subjected to somatic hypermutations which, after exposure to antigen and selection, allow affinity maturation for a particular antigen. The sequence is that of Immunoglobulin heavy variable 1-69 from Homo sapiens (Human).